Reading from the N-terminus, the 376-residue chain is Transmembrane protein 183A (376 aa).

Disordered stretches follow at residues 1 to 20 (MARG…AMPK) and 100 to 127 (MDAQ…ELDG). A helical membrane pass occupies residues 300–320 (LNFIFIPIVMGMIFTLFTINV).

This sequence belongs to the TMEM183 family.

It localises to the membrane. This Homo sapiens (Human) protein is Transmembrane protein 183A (TMEM183A).